A 780-amino-acid polypeptide reads, in one-letter code: Chloride channel protein CLC-b (780 aa).

The disordered stretch occupies residues Met1–Asn28. The next 12 helical transmembrane spans lie at Thr87–Val107, Gly130–Val150, Phe177–Leu197, Leu205–Arg225, Gly247–Leu267, Ala277–Ile297, Val327–Tyr347, Val370–Leu390, Met452–Ile472, Gly477–Met497, Ala509–Val529, and Ile530–Ile550. CBS domains follow at residues Ala594 to Glu663 and Thr708 to Leu770. Residues His735–Thr755 traverse the membrane as a helical segment.

Belongs to the chloride channel (TC 2.A.49) family. In terms of assembly, homodimer. Interacts with PP2A5. As to expression, broadly expressed in the plant.

The protein resides in the membrane. Functionally, voltage-gated chloride channel. The polypeptide is Chloride channel protein CLC-b (CLC-B) (Arabidopsis thaliana (Mouse-ear cress)).